The sequence spans 213 residues: Charged multivesicular body protein 2b (213 aa).

Residue alanine 2 is modified to N-acetylalanine. Residues 25-55 (QRAIIRDRAALEKQEKQLELEIKKMAKIGNK) are a coiled coil. Low complexity predominate over residues 179-194 (AKAPSAARSLPSASTS). The interval 179–199 (AKAPSAARSLPSASTSKATIS) is disordered. Serine 199 is subject to Phosphoserine. Positions 201 to 211 (EEIERQLKALG) match the MIT-interacting motif motif.

This sequence belongs to the SNF7 family. In terms of assembly, probable core component of the endosomal sorting required for transport complex III (ESCRT-III). ESCRT-III components are thought to multimerize to form a flat lattice on the perimeter membrane of the endosome. Several assembly forms of ESCRT-III may exist that interact and act sequentially. Interacts with CHMP2A. Interacts with VPS4A. Interacts with VPS4B; the interaction is direct. As to expression, in brain, it is expressed in all neuronal populations with a relatively enhanced expression in the hippocampus, frontal and temporal lobes and in both granule and Purkinje cells of the cerebellum. Not expressed in astrocytes or oligodendrocytes.

The protein localises to the cytoplasm. It localises to the cytosol. It is found in the late endosome membrane. Functionally, probable core component of the endosomal sorting required for transport complex III (ESCRT-III) which is involved in multivesicular bodies (MVBs) formation and sorting of endosomal cargo proteins into MVBs. MVBs contain intraluminal vesicles (ILVs) that are generated by invagination and scission from the limiting membrane of the endosome and mostly are delivered to lysosomes enabling degradation of membrane proteins, such as stimulated growth factor receptors, lysosomal enzymes and lipids. The MVB pathway appears to require the sequential function of ESCRT-O, -I,-II and -III complexes. ESCRT-III proteins mostly dissociate from the invaginating membrane before the ILV is released. The ESCRT machinery also functions in topologically equivalent membrane fission events, such as the terminal stages of cytokinesis. ESCRT-III proteins are believed to mediate the necessary vesicle extrusion and/or membrane fission activities, possibly in conjunction with the AAA ATPase VPS4. The polypeptide is Charged multivesicular body protein 2b (Chmp2b) (Mus musculus (Mouse)).